A 582-amino-acid chain; its full sequence is Methionine--tRNA ligase (582 aa).

The short motif at 24 to 34 (PYIYAVPHLGN) is the 'HIGH' region element. 4 residues coordinate Zn(2+): C156, C159, C169, and C172. A 'KMSKS' region motif is present at residues 346 to 350 (KFSKS). ATP is bound at residue K349.

This sequence belongs to the class-I aminoacyl-tRNA synthetase family. MetG type 1 subfamily. Zn(2+) serves as cofactor.

It localises to the cytoplasm. It catalyses the reaction tRNA(Met) + L-methionine + ATP = L-methionyl-tRNA(Met) + AMP + diphosphate. Its function is as follows. Is required not only for elongation of protein synthesis but also for the initiation of all mRNA translation through initiator tRNA(fMet) aminoacylation. This chain is Methionine--tRNA ligase, found in Caldivirga maquilingensis (strain ATCC 700844 / DSM 13496 / JCM 10307 / IC-167).